The sequence spans 491 residues: Alpha-2-antiplasmin (491 aa).

Positions 1-27 (MALLRGLLVLSLSCLQGPCFTFSPVSA) are cleaved as a signal peptide. Positions 28–39 (VDLPGQQPVSEQ) are excised as a propeptide. A disulfide bridge links cysteine 70 with cysteine 143. Asparagine 126, asparagine 295, asparagine 309, and asparagine 316 each carry an N-linked (GlcNAc...) asparagine glycan. The interval 439–491 (SALPQLQEQRDSPDNRLIGQNDKADFHGGKTFGPDLKLAPRMEEDYPQFSSPK) is disordered. Residue tyrosine 484 is modified to Sulfotyrosine.

The protein belongs to the serpin family. Forms protease inhibiting heterodimer with TMPRSS7. Post-translationally, proteolytically cleaved at Pro-35 by both the prolyl endopeptidase FAP form and antiplasmin-cleaving enzyme FAP soluble form to generate mature alpha-2-antiplasmin. Expressed by the liver and secreted in plasma.

The protein resides in the secreted. Its function is as follows. Serine protease inhibitor. The major targets of this inhibitor are plasmin and trypsin, but it also inactivates matriptase-3/TMPRSS7 and chymotrypsin. The polypeptide is Alpha-2-antiplasmin (Serpinf2) (Mus musculus (Mouse)).